The sequence spans 329 residues: GTP 3',8-cyclase (329 aa).

Positions 8 to 229 constitute a Radical SAM core domain; that stretch reads AFARTFYYLR…AGWQRRLPGR (222 aa). A GTP-binding site is contributed by arginine 17. Positions 24 and 28 each coordinate [4Fe-4S] cluster. Position 30 (tyrosine 30) interacts with S-adenosyl-L-methionine. Residue cysteine 31 coordinates [4Fe-4S] cluster. Residue arginine 68 coordinates GTP. Residue glycine 72 coordinates S-adenosyl-L-methionine. GTP is bound at residue threonine 99. Serine 123 contributes to the S-adenosyl-L-methionine binding site. GTP is bound at residue lysine 160. S-adenosyl-L-methionine is bound at residue methionine 194. Positions 257 and 260 each coordinate [4Fe-4S] cluster. 262 to 264 is a binding site for GTP; it reads RLR. Cysteine 274 lines the [4Fe-4S] cluster pocket.

It belongs to the radical SAM superfamily. MoaA family. In terms of assembly, monomer and homodimer. The cofactor is [4Fe-4S] cluster.

It catalyses the reaction GTP + AH2 + S-adenosyl-L-methionine = (8S)-3',8-cyclo-7,8-dihydroguanosine 5'-triphosphate + 5'-deoxyadenosine + L-methionine + A + H(+). Its pathway is cofactor biosynthesis; molybdopterin biosynthesis. Functionally, catalyzes the cyclization of GTP to (8S)-3',8-cyclo-7,8-dihydroguanosine 5'-triphosphate. The chain is GTP 3',8-cyclase from Edwardsiella ictaluri (strain 93-146).